The chain runs to 95 residues: Aspartyl/glutamyl-tRNA(Asn/Gln) amidotransferase subunit C (95 aa).

Belongs to the GatC family. As to quaternary structure, heterotrimer of A, B and C subunits.

It catalyses the reaction L-glutamyl-tRNA(Gln) + L-glutamine + ATP + H2O = L-glutaminyl-tRNA(Gln) + L-glutamate + ADP + phosphate + H(+). The catalysed reaction is L-aspartyl-tRNA(Asn) + L-glutamine + ATP + H2O = L-asparaginyl-tRNA(Asn) + L-glutamate + ADP + phosphate + 2 H(+). Functionally, allows the formation of correctly charged Asn-tRNA(Asn) or Gln-tRNA(Gln) through the transamidation of misacylated Asp-tRNA(Asn) or Glu-tRNA(Gln) in organisms which lack either or both of asparaginyl-tRNA or glutaminyl-tRNA synthetases. The reaction takes place in the presence of glutamine and ATP through an activated phospho-Asp-tRNA(Asn) or phospho-Glu-tRNA(Gln). This chain is Aspartyl/glutamyl-tRNA(Asn/Gln) amidotransferase subunit C, found in Rhizobium leguminosarum bv. trifolii (strain WSM2304).